The primary structure comprises 336 residues: Atypical chemokine receptor 1 (336 aa).

The Extracellular portion of the chain corresponds to Met-1–Pro-63. N-linked (GlcNAc...) asparagine glycans are attached at residues Asn-16, Asn-27, and Asn-33. 2 disulfides stabilise this stretch: Cys-51-Cys-276 and Cys-129-Cys-195. The chain crosses the membrane as a helical span at residues Phe-64–Phe-84. The Cytoplasmic portion of the chain corresponds to Arg-85–Gly-95. A helical transmembrane segment spans residues Trp-96–Leu-116. Residues Ala-117–Cys-129 are Extracellular-facing. The chain crosses the membrane as a helical span at residues Ser-130–Leu-153. Residues Gly-154–Thr-166 lie on the Cytoplasmic side of the membrane. A helical transmembrane segment spans residues Leu-167–Ala-187. Residues Ser-188–Gln-207 are Extracellular-facing. The chain crosses the membrane as a helical span at residues Ala-208–Ala-228. The Cytoplasmic portion of the chain corresponds to Lys-229–Asn-244. A helical membrane pass occupies residues Ile-245–Leu-265. The Extracellular segment spans residues Val-266 to Asn-287. The helical transmembrane segment at Leu-288–Tyr-308 threads the bilayer. Topologically, residues His-309 to Ser-336 are cytoplasmic.

Belongs to the G-protein coupled receptor 1 family. Atypical chemokine receptor subfamily.

It localises to the early endosome. It is found in the recycling endosome. The protein resides in the membrane. Atypical chemokine receptor that controls chemokine levels and localization via high-affinity chemokine binding that is uncoupled from classic ligand-driven signal transduction cascades, resulting instead in chemokine sequestration, degradation, or transcytosis. Also known as interceptor (internalizing receptor) or chemokine-scavenging receptor or chemokine decoy receptor. Has a promiscuous chemokine-binding profile, interacting with inflammatory chemokines of both the CXC and the CC subfamilies but not with homeostatic chemokines. Acts as a receptor for chemokines including CCL2, CCL5, CCL7, CCL11, CCL13, CCL14, CCL17, CXCL5, CXCL6, IL8/CXCL8, CXCL11, GRO, RANTES, MCP-1 and TARC. May regulate chemokine bioavailability and, consequently, leukocyte recruitment through two distinct mechanisms: when expressed in endothelial cells, it sustains the abluminal to luminal transcytosis of tissue-derived chemokines and their subsequent presentation to circulating leukocytes; when expressed in erythrocytes, serves as blood reservoir of cognate chemokines but also as a chemokine sink, buffering potential surges in plasma chemokine levels. The sequence is that of Atypical chemokine receptor 1 (ACKR1) from Gorilla gorilla gorilla (Western lowland gorilla).